The sequence spans 393 residues: SH3 domain-binding protein 5-like (393 aa).

The interval 1–58 (MAELRQVPGGRETPQGELRPEVVEDEVPRSPVAEEPGGGGSSSSEAKLSPREEEELDP) is disordered. Thr13 is modified (phosphothreonine). Residues 18-28 (LRPEVVEDEVP) are compositionally biased toward basic and acidic residues. Phosphoserine occurs at positions 30 and 49. Coiled-coil stretches lie at residues 59–140 (RIQE…YERA) and 169–272 (WQEM…EQIH). The tract at residues 273-332 (ARRRGGLPPHPLGPRRSSPVGAEAGPEDMEDGDSGIEGAEGAGLEEGSSLGPGPAPDTDT) is disordered. Positions 297–306 (GPEDMEDGDS) are enriched in acidic residues. A compositionally biased stretch (low complexity) spans 317 to 332 (EEGSSLGPGPAPDTDT). Residues Ser343, Ser350, Ser358, Ser362, and Ser378 each carry the phosphoserine modification. A disordered region spans residues 362–393 (SLDGQELGTRSGGRRGSDGGARGGRHQRSVSL). The segment covering 384-393 (GGRHQRSVSL) has biased composition (basic residues).

This sequence belongs to the SH3BP5 family.

Functions as a guanine nucleotide exchange factor (GEF) for RAB11A. This chain is SH3 domain-binding protein 5-like (SH3BP5L), found in Homo sapiens (Human).